The chain runs to 1395 residues: G2/mitotic-specific cyclin-B3 (1395 aa).

The segment at 1 to 59 is disordered; it reads MLLPLPPQSSKPVPKKSQSSKIVPSHHDPSEKTGENCQTKISPSSLQESPSSLQGALKK. The segment covering 10-23 has biased composition (low complexity); sequence SKPVPKKSQSSKIV. The segment covering 25–34 has biased composition (basic and acidic residues); sequence SHHDPSEKTG. The segment covering 42–54 has biased composition (low complexity); sequence SPSSLQESPSSLQ. Residues 60–68 carry the D-box motif; sequence RSAFEDLTN. Disordered regions lie at residues 418-464 and 1074-1122; these read LSIK…PTEE and ATMT…DSSD. The span at 419-431 shows a compositional bias: basic and acidic residues; sequence SIKEKPSTEKESF. A compositionally biased stretch (low complexity) spans 1082–1093; it reads SRTTTESSACES.

The protein belongs to the cyclin family. Cyclin AB subfamily. In terms of assembly, interacts with CDK2 kinase. Post-translationally, ubiquitinated. Ubiquitination leads to its degradation during anaphase entry, after degradation of CCNB1. In terms of tissue distribution, testis specific. In testis, it is expressed in developing germ cells, but not in Leydig cells. Weakly or not expressed in other tissues.

It is found in the nucleus. Cyclins are positive regulatory subunits of the cyclin-dependent kinases (CDKs), and thereby play an essential role in the control of the cell cycle, notably via their destruction during cell division. Its tissue specificity suggest that it may be required during early meiotic prophase I. This Homo sapiens (Human) protein is G2/mitotic-specific cyclin-B3 (CCNB3).